Reading from the N-terminus, the 201-residue chain is 3-isopropylmalate dehydratase small subunit (201 aa).

The protein belongs to the LeuD family. LeuD type 1 subfamily. As to quaternary structure, heterodimer of LeuC and LeuD.

It carries out the reaction (2R,3S)-3-isopropylmalate = (2S)-2-isopropylmalate. The protein operates within amino-acid biosynthesis; L-leucine biosynthesis; L-leucine from 3-methyl-2-oxobutanoate: step 2/4. In terms of biological role, catalyzes the isomerization between 2-isopropylmalate and 3-isopropylmalate, via the formation of 2-isopropylmaleate. The chain is 3-isopropylmalate dehydratase small subunit from Rhodopseudomonas palustris (strain ATCC BAA-98 / CGA009).